The sequence spans 224 residues: Cytidylate kinase (224 aa).

11–19 is a binding site for ATP; the sequence is GPAGAGKST.

The protein belongs to the cytidylate kinase family. Type 1 subfamily.

The protein resides in the cytoplasm. The enzyme catalyses CMP + ATP = CDP + ADP. The catalysed reaction is dCMP + ATP = dCDP + ADP. The sequence is that of Cytidylate kinase from Lysinibacillus sphaericus (strain C3-41).